A 227-amino-acid polypeptide reads, in one-letter code: Orotidine 5'-phosphate decarboxylase (227 aa).

Residues D12, K34, 61 to 70, T117, R178, Q187, G207, and R208 contribute to the substrate site; that span reads DLKLHDIPNT. Residue K63 is the Proton donor of the active site.

The protein belongs to the OMP decarboxylase family. Type 1 subfamily. As to quaternary structure, homodimer.

It carries out the reaction orotidine 5'-phosphate + H(+) = UMP + CO2. Its pathway is pyrimidine metabolism; UMP biosynthesis via de novo pathway; UMP from orotate: step 2/2. Its function is as follows. Catalyzes the decarboxylation of orotidine 5'-monophosphate (OMP) to uridine 5'-monophosphate (UMP). The polypeptide is Orotidine 5'-phosphate decarboxylase (Anaeromyxobacter sp. (strain K)).